A 288-amino-acid polypeptide reads, in one-letter code: Very-long-chain (3R)-3-hydroxyacyl-CoA dehydratase 1 (288 aa).

The disordered stretch occupies residues 1–59 (MGRLTEAAAAGGGASAARSAGPPPAPLPLSSTSPGCAAAMASSEEDGTNGGASEASDER). Over 1 to 75 (MGRLTEAAAA…RRLGLLATIW (75 aa)) the chain is Cytoplasmic. The helical transmembrane segment at 76 to 95 (LTFYNIAMTAGWLVLAIAMV) threads the bilayer. Over 96–114 (RFYMEKGTHKGLYKSIQKT) the chain is Lumenal. A helical membrane pass occupies residues 115–131 (LKFFQTFALLEIVHCLI). The Cytoplasmic segment spans residues 132-141 (GIVPTSVLVA). Residues 142 to 159 (GVQVSSRIFMVWLVTHSI) form a helical membrane-spanning segment. The Lumenal portion of the chain corresponds to 160–165 (KPIQNE). A helical membrane pass occupies residues 166-180 (ESVVLFLVAWTVTEI). Over 181 to 203 (TRYSFYTFSLLDHLPYFIKWARY) the chain is Cytoplasmic. A helical transmembrane segment spans residues 204–221 (NFFIILYPVGVAGELLTI). Catalysis depends on residues Y210 and E217. The Lumenal portion of the chain corresponds to 222 to 251 (YAALPYVKKTGMFSIRLPNKYNVSFDYYYF). Residue N243 is glycosylated (N-linked (GlcNAc...) asparagine). The helical transmembrane segment at 252-269 (LLITMASYIPLFPQLYFH) threads the bilayer. At 270-288 (MLRQRRKVLHGEVIVEKDD) the chain is on the cytoplasmic side.

Belongs to the very long-chain fatty acids dehydratase HACD family. In terms of assembly, may interact with enzymes of the ELO family (including ELOVL1); with those enzymes that mediate condensation, the first of the four steps of the reaction cycle responsible for fatty acids elongation, may be part of a larger fatty acids elongase complex. Interacts with TECR. Post-translationally, N-glycosylated. As to expression, expressed in heart.

The protein resides in the endoplasmic reticulum membrane. It catalyses the reaction a very-long-chain (3R)-3-hydroxyacyl-CoA = a very-long-chain (2E)-enoyl-CoA + H2O. The enzyme catalyses (3R)-hydroxyhexadecanoyl-CoA = (2E)-hexadecenoyl-CoA + H2O. It carries out the reaction (3R)-hydroxyoctadecanoyl-CoA = (2E)-octadecenoyl-CoA + H2O. The catalysed reaction is (3R)-hydroxyeicosanoyl-CoA = (2E)-eicosenoyl-CoA + H2O. It catalyses the reaction (3R)-hydroxydocosanoyl-CoA = (2E)-docosenoyl-CoA + H2O. The enzyme catalyses (3R)-hydroxytetracosanoyl-CoA = (2E)-tetracosenoyl-CoA + H2O. It carries out the reaction (3R)-hydroxyhexacosanoyl-CoA = (2E)-hexacosenoyl-CoA + H2O. Its pathway is lipid metabolism; fatty acid biosynthesis. Functionally, catalyzes the third of the four reactions of the long-chain fatty acids elongation cycle. This endoplasmic reticulum-bound enzymatic process, allows the addition of two carbons to the chain of long- and very long-chain fatty acids/VLCFAs per cycle. This enzyme catalyzes the dehydration of the 3-hydroxyacyl-CoA intermediate into trans-2,3-enoyl-CoA, within each cycle of fatty acid elongation. Thereby, it participates in the production of VLCFAs of different chain lengths that are involved in multiple biological processes as precursors of membrane lipids and lipid mediators. The chain is Very-long-chain (3R)-3-hydroxyacyl-CoA dehydratase 1 (HACD1) from Ovis aries (Sheep).